The sequence spans 223 residues: Icarapin (223 aa).

Positions 1–19 are cleaved as a signal peptide; sequence MKTLGVLFIAAWFIACTHS. 4 N-linked (GlcNAc...) asparagine glycosylation sites follow: N126, N142, N168, and N193. Over residues 186-203 the composition is skewed to polar residues; it reads LPTLIGKNETSTQSSRSV. A disordered region spans residues 186–223; sequence LPTLIGKNETSTQSSRSVESVEDFDNEIPKNQGDVLTA.

In terms of tissue distribution, expressed by the venom duct.

The protein resides in the secreted. In Apis mellifera carnica (Carniolan honeybee), this protein is Icarapin.